The chain runs to 234 residues: Putative N-acetylmannosamine-6-phosphate 2-epimerase (234 aa).

This sequence belongs to the NanE family.

The enzyme catalyses an N-acyl-D-glucosamine 6-phosphate = an N-acyl-D-mannosamine 6-phosphate. The protein operates within amino-sugar metabolism; N-acetylneuraminate degradation; D-fructose 6-phosphate from N-acetylneuraminate: step 3/5. Its function is as follows. Converts N-acetylmannosamine-6-phosphate (ManNAc-6-P) to N-acetylglucosamine-6-phosphate (GlcNAc-6-P). The chain is Putative N-acetylmannosamine-6-phosphate 2-epimerase from Klebsiella pneumoniae subsp. pneumoniae (strain ATCC 700721 / MGH 78578).